Here is a 115-residue protein sequence, read N- to C-terminus: Putative membrane protein insertion efficiency factor (115 aa).

Belongs to the UPF0161 family.

The protein resides in the cell membrane. In terms of biological role, could be involved in insertion of integral membrane proteins into the membrane. The chain is Putative membrane protein insertion efficiency factor from Mycolicibacterium paratuberculosis (strain ATCC BAA-968 / K-10) (Mycobacterium paratuberculosis).